Consider the following 332-residue polypeptide: Methylthioribose-1-phosphate isomerase (332 aa).

Residues 44-46, R87, and Q192 each bind substrate; that span reads RGA. D233 functions as the Proton donor in the catalytic mechanism. 243–244 lines the substrate pocket; sequence NK.

Belongs to the eIF-2B alpha/beta/delta subunits family. MtnA subfamily.

The enzyme catalyses 5-(methylsulfanyl)-alpha-D-ribose 1-phosphate = 5-(methylsulfanyl)-D-ribulose 1-phosphate. It functions in the pathway amino-acid biosynthesis; L-methionine biosynthesis via salvage pathway; L-methionine from S-methyl-5-thio-alpha-D-ribose 1-phosphate: step 1/6. Its function is as follows. Catalyzes the interconversion of methylthioribose-1-phosphate (MTR-1-P) into methylthioribulose-1-phosphate (MTRu-1-P). This chain is Methylthioribose-1-phosphate isomerase, found in Dehalococcoides mccartyi (strain ATCC BAA-2100 / JCM 16839 / KCTC 5957 / BAV1).